The sequence spans 308 residues: D-alanine--D-alanine ligase (308 aa).

The ATP-grasp domain maps to 102-302; sequence KHVAKAAGIP…FGEFLRWMVE (201 aa). 128-183 serves as a coordination point for ATP; sequence PMKPPYVVKPVREGSSFGVVIVKEDQSHPPQVITSSDWRYGDRIMVERYVAGREFT. Residues D252, E269, and N271 each coordinate Mg(2+).

This sequence belongs to the D-alanine--D-alanine ligase family. Mg(2+) serves as cofactor. It depends on Mn(2+) as a cofactor.

It localises to the cytoplasm. It catalyses the reaction 2 D-alanine + ATP = D-alanyl-D-alanine + ADP + phosphate + H(+). It functions in the pathway cell wall biogenesis; peptidoglycan biosynthesis. In terms of biological role, cell wall formation. In Sinorhizobium medicae (strain WSM419) (Ensifer medicae), this protein is D-alanine--D-alanine ligase.